Here is a 143-residue protein sequence, read N- to C-terminus: MTTTPRQPLFCAHADTNGDPGRCACGQQLADVGPATPPPPWCEPGTEPIWEQLTERYGGVTICQWTRYFPAGDPVAADVWIAADDRVVDGRVLRTQPAIHYTEPPVLGIGPAAARRLAAELLNAADTLDDGRRQLDDLGEHRR.

This is an uncharacterized protein from Mycobacterium tuberculosis (strain CDC 1551 / Oshkosh).